Here is a 285-residue protein sequence, read N- to C-terminus: Undecaprenyl-diphosphatase (285 aa).

Transmembrane regions (helical) follow at residues 40–60 (DELLINAASNAGTLLAMLLYF), 92–112 (LCILVATPFALAGAVIYENFI), 122–142 (SVYAVAASTIVFGALLWWADA), 159–179 (FLIGASQLVAVIIPGTSRSGI), 197–217 (FSMLIGAPILAAVSLYGLLGL), 233–253 (LIVAALAFVSGYASIGLLMAL), and 259–279 (FLPFVLYRFALGIALLATSPI).

The protein belongs to the UppP family.

Its subcellular location is the cell inner membrane. It carries out the reaction di-trans,octa-cis-undecaprenyl diphosphate + H2O = di-trans,octa-cis-undecaprenyl phosphate + phosphate + H(+). Functionally, catalyzes the dephosphorylation of undecaprenyl diphosphate (UPP). Confers resistance to bacitracin. The sequence is that of Undecaprenyl-diphosphatase from Hyphomonas neptunium (strain ATCC 15444).